Here is a 546-residue protein sequence, read N- to C-terminus: (-)-5-epieremophilene synthase STPS1 (546 aa).

Mg(2+) contacts are provided by Asp299, Asp303, Asp442, Thr446, and Glu450. The short motif at 299 to 303 (DDTYD) is the DDXXD motif element.

This sequence belongs to the terpene synthase family. Tpsa subfamily. As to quaternary structure, monomer. Mg(2+) is required as a cofactor. Highly expressed in leaves and at lower levels in flowers.

The catalysed reaction is (2E,6E)-farnesyl diphosphate = (-)-5-epi-eremophilene + diphosphate. Its pathway is secondary metabolite biosynthesis; terpenoid biosynthesis. Functionally, sesquiterpene synthase that catalyzes the conversion of farnesyl diphosphate to (-)-5-epi-eremophilene. The chain is (-)-5-epieremophilene synthase STPS1 from Salvia miltiorrhiza (Chinese sage).